A 618-amino-acid chain; its full sequence is DNA mismatch repair protein MutL (618 aa).

The span at 367-378 (EPTAAREPATPR) shows a compositional bias: low complexity. The disordered stretch occupies residues 367 to 402 (EPTAAREPATPRYSGGASGGNGGRQTAGGWPHAQPG). The segment covering 382–392 (GASGGNGGRQT) has biased composition (gly residues).

This sequence belongs to the DNA mismatch repair MutL/HexB family.

Its function is as follows. This protein is involved in the repair of mismatches in DNA. It is required for dam-dependent methyl-directed DNA mismatch repair. May act as a 'molecular matchmaker', a protein that promotes the formation of a stable complex between two or more DNA-binding proteins in an ATP-dependent manner without itself being part of a final effector complex. This chain is DNA mismatch repair protein MutL, found in Salmonella choleraesuis (strain SC-B67).